Reading from the N-terminus, the 95-residue chain is Small ribosomal subunit protein bS6 (95 aa).

The protein belongs to the bacterial ribosomal protein bS6 family.

Binds together with bS18 to 16S ribosomal RNA. This Desulfitobacterium hafniense (strain DSM 10664 / DCB-2) protein is Small ribosomal subunit protein bS6.